Reading from the N-terminus, the 89-residue chain is Small ribosomal subunit protein uS15 (89 aa).

The protein belongs to the universal ribosomal protein uS15 family. As to quaternary structure, part of the 30S ribosomal subunit. Forms a bridge to the 50S subunit in the 70S ribosome, contacting the 23S rRNA.

Its function is as follows. One of the primary rRNA binding proteins, it binds directly to 16S rRNA where it helps nucleate assembly of the platform of the 30S subunit by binding and bridging several RNA helices of the 16S rRNA. Functionally, forms an intersubunit bridge (bridge B4) with the 23S rRNA of the 50S subunit in the ribosome. The sequence is that of Small ribosomal subunit protein uS15 from Geobacillus sp. (strain WCH70).